We begin with the raw amino-acid sequence, 156 residues long: Ribosomal RNA large subunit methyltransferase H (156 aa).

Residues leucine 73, glycine 104, and 123-128 (LSPLTL) contribute to the S-adenosyl-L-methionine site.

It belongs to the RNA methyltransferase RlmH family. In terms of assembly, homodimer.

The protein resides in the cytoplasm. It catalyses the reaction pseudouridine(1915) in 23S rRNA + S-adenosyl-L-methionine = N(3)-methylpseudouridine(1915) in 23S rRNA + S-adenosyl-L-homocysteine + H(+). Its function is as follows. Specifically methylates the pseudouridine at position 1915 (m3Psi1915) in 23S rRNA. The chain is Ribosomal RNA large subunit methyltransferase H from Pectobacterium atrosepticum (strain SCRI 1043 / ATCC BAA-672) (Erwinia carotovora subsp. atroseptica).